Here is a 378-residue protein sequence, read N- to C-terminus: Queuine tRNA-ribosyltransferase (378 aa).

D91 functions as the Proton acceptor in the catalytic mechanism. Substrate is bound by residues D91–F95, D145, Q197, and G224. Catalysis depends on D274, which acts as the Nucleophile. An RNA binding; important for wobble base 34 recognition region spans residues T279–R283. Zn(2+) contacts are provided by C312, C314, C317, and H343.

Belongs to the queuine tRNA-ribosyltransferase family. Homodimer. Within each dimer, one monomer is responsible for RNA recognition and catalysis, while the other monomer binds to the replacement base PreQ1. Zn(2+) serves as cofactor.

It carries out the reaction 7-aminomethyl-7-carbaguanine + guanosine(34) in tRNA = 7-aminomethyl-7-carbaguanosine(34) in tRNA + guanine. It participates in tRNA modification; tRNA-queuosine biosynthesis. Catalyzes the base-exchange of a guanine (G) residue with the queuine precursor 7-aminomethyl-7-deazaguanine (PreQ1) at position 34 (anticodon wobble position) in tRNAs with GU(N) anticodons (tRNA-Asp, -Asn, -His and -Tyr). Catalysis occurs through a double-displacement mechanism. The nucleophile active site attacks the C1' of nucleotide 34 to detach the guanine base from the RNA, forming a covalent enzyme-RNA intermediate. The proton acceptor active site deprotonates the incoming PreQ1, allowing a nucleophilic attack on the C1' of the ribose to form the product. After dissociation, two additional enzymatic reactions on the tRNA convert PreQ1 to queuine (Q), resulting in the hypermodified nucleoside queuosine (7-(((4,5-cis-dihydroxy-2-cyclopenten-1-yl)amino)methyl)-7-deazaguanosine). The protein is Queuine tRNA-ribosyltransferase of Methylacidiphilum infernorum (isolate V4) (Methylokorus infernorum (strain V4)).